Consider the following 336-residue polypeptide: Fructose-1,6-bisphosphatase class 1 (336 aa).

Residues Glu90, Asp112, Leu114, and Asp115 each contribute to the Mg(2+) site. Residues 115–118 (DGSS), Asn211, and Lys277 each bind substrate. Glu283 contacts Mg(2+).

Belongs to the FBPase class 1 family. In terms of assembly, homotetramer. It depends on Mg(2+) as a cofactor.

The protein localises to the cytoplasm. It carries out the reaction beta-D-fructose 1,6-bisphosphate + H2O = beta-D-fructose 6-phosphate + phosphate. Its pathway is carbohydrate biosynthesis; gluconeogenesis. This chain is Fructose-1,6-bisphosphatase class 1, found in Pseudomonas paraeruginosa (strain DSM 24068 / PA7) (Pseudomonas aeruginosa (strain PA7)).